A 460-amino-acid polypeptide reads, in one-letter code: 3-isopropylmalate dehydratase large subunit (460 aa).

Residues C338, C398, and C401 each contribute to the [4Fe-4S] cluster site.

This sequence belongs to the aconitase/IPM isomerase family. LeuC type 1 subfamily. In terms of assembly, heterodimer of LeuC and LeuD. [4Fe-4S] cluster serves as cofactor.

The enzyme catalyses (2R,3S)-3-isopropylmalate = (2S)-2-isopropylmalate. It participates in amino-acid biosynthesis; L-leucine biosynthesis; L-leucine from 3-methyl-2-oxobutanoate: step 2/4. In terms of biological role, catalyzes the isomerization between 2-isopropylmalate and 3-isopropylmalate, via the formation of 2-isopropylmaleate. This is 3-isopropylmalate dehydratase large subunit from Streptococcus thermophilus (strain ATCC BAA-491 / LMD-9).